Here is a 204-residue protein sequence, read N- to C-terminus: Large ribosomal subunit protein uL4 (204 aa).

Residues 49–74 (AKKRGEVSGGGKKPWSQKGGGRARAG) form a disordered region. The segment covering 55-71 (VSGGGKKPWSQKGGGRA) has biased composition (gly residues).

The protein belongs to the universal ribosomal protein uL4 family. Part of the 50S ribosomal subunit.

Functionally, one of the primary rRNA binding proteins, this protein initially binds near the 5'-end of the 23S rRNA. It is important during the early stages of 50S assembly. It makes multiple contacts with different domains of the 23S rRNA in the assembled 50S subunit and ribosome. Its function is as follows. Forms part of the polypeptide exit tunnel. This is Large ribosomal subunit protein uL4 from Wolinella succinogenes (strain ATCC 29543 / DSM 1740 / CCUG 13145 / JCM 31913 / LMG 7466 / NCTC 11488 / FDC 602W) (Vibrio succinogenes).